The primary structure comprises 2184 residues: Chromodomain-helicase-DNA-binding protein 8 (2184 aa).

Disordered stretches follow at residues 379 to 399 (VKTS…KQEK) and 419 to 527 (IPRV…KRKK). The span at 387–399 (ESRKLDSQKKQEK) shows a compositional bias: basic and acidic residues. The segment covering 425-437 (EDELPSVNPEDDD) has biased composition (acidic residues). A compositionally biased stretch (basic and acidic residues) spans 448 to 459 (GETSDRSKDEKP). Basic residues predominate over residues 516 to 527 (KRRSNRQVKRKK). 2 consecutive Chromo domains span residues 586–653 (AIVD…TQMQ) and 668–734 (VEVD…RVAR). One can recognise a Helicase ATP-binding domain in the interval 767 to 941 (LFNWYNRQNC…FSLLHFLEPT (175 aa)). 780–787 (DEMGLGKT) serves as a coordination point for ATP. The DEAH box signature appears at 892 to 895 (DEAH). One can recognise a Helicase C-terminal domain in the interval 1081–1252 (LIDKLLPKLR…FTKKEIEDLL (172 aa)). 2 disordered regions span residues 1907 to 1989 (GISG…EESR) and 2039 to 2076 (WSSP…PAPD). 2 stretches are compositionally biased toward low complexity: residues 1912-1961 (SRPS…SNSE) and 2040-2054 (SSPR…DSPD).

The protein belongs to the SNF2/RAD54 helicase family. CHD8 subfamily. Component of some MLL1/MLL complex.

Its subcellular location is the nucleus. It carries out the reaction ATP + H2O = ADP + phosphate + H(+). In terms of biological role, ATP-dependent chromatin-remodeling factor, it slides nucleosomes along DNA; nucleosome sliding requires ATP. Acts as a transcription repressor by remodeling chromatin structure and recruiting histone H1 to target genes. Suppresses p53/tp53-mediated apoptosis by recruiting histone H1 and preventing p53/tp53 transactivation activity. Acts as a negative regulator of Wnt signaling pathway by regulating beta-catenin (ctnnb1) activity. Negatively regulates ctnnb1-targeted gene expression by being recruited specifically to the promoter regions of several ctnnb1 responsive genes. May also act as a transcription activator by participating in efficient U6 RNA polymerase III transcription. In Xenopus tropicalis (Western clawed frog), this protein is Chromodomain-helicase-DNA-binding protein 8.